The chain runs to 273 residues: 3-methyl-2-oxobutanoate hydroxymethyltransferase (273 aa).

The Mg(2+) site is built by D53 and D92. Residues 53 to 54 (DS), D92, and K120 each bind 3-methyl-2-oxobutanoate. E122 serves as a coordination point for Mg(2+). The Proton acceptor role is filled by E189.

This sequence belongs to the PanB family. As to quaternary structure, homodecamer; pentamer of dimers. It depends on Mg(2+) as a cofactor.

It is found in the cytoplasm. The catalysed reaction is 3-methyl-2-oxobutanoate + (6R)-5,10-methylene-5,6,7,8-tetrahydrofolate + H2O = 2-dehydropantoate + (6S)-5,6,7,8-tetrahydrofolate. It participates in cofactor biosynthesis; (R)-pantothenate biosynthesis; (R)-pantoate from 3-methyl-2-oxobutanoate: step 1/2. Functionally, catalyzes the reversible reaction in which hydroxymethyl group from 5,10-methylenetetrahydrofolate is transferred onto alpha-ketoisovalerate to form ketopantoate. In Cupriavidus taiwanensis (strain DSM 17343 / BCRC 17206 / CCUG 44338 / CIP 107171 / LMG 19424 / R1) (Ralstonia taiwanensis (strain LMG 19424)), this protein is 3-methyl-2-oxobutanoate hydroxymethyltransferase.